A 207-amino-acid chain; its full sequence is MIKLFVGLGNPGPEYEDTRHNAGFWWIDALARELKVQLVPERSYFGLMARASVRGENVWLLQPQTFMNLSGKSVGALARFFKIQPEEVLVVHDELDFEPGQVKLKRGGSHGGHNGLRDIHAQLGSADYWRLRIGIGHPGHKAEVANWVLKKPAPDQRQLIEDSIAHSLKAWPELQAGNMDKATLLIHTTKPPRPKPARPATAESDKG.

Tyr15 serves as a coordination point for tRNA. His20 serves as the catalytic Proton acceptor. Residues Phe66, Asn68, and Asn114 each contribute to the tRNA site. The disordered stretch occupies residues 187-207 (HTTKPPRPKPARPATAESDKG). The span at 198-207 (RPATAESDKG) shows a compositional bias: low complexity.

Belongs to the PTH family. In terms of assembly, monomer.

The protein localises to the cytoplasm. It carries out the reaction an N-acyl-L-alpha-aminoacyl-tRNA + H2O = an N-acyl-L-amino acid + a tRNA + H(+). Its function is as follows. Hydrolyzes ribosome-free peptidyl-tRNAs (with 1 or more amino acids incorporated), which drop off the ribosome during protein synthesis, or as a result of ribosome stalling. In terms of biological role, catalyzes the release of premature peptidyl moieties from peptidyl-tRNA molecules trapped in stalled 50S ribosomal subunits, and thus maintains levels of free tRNAs and 50S ribosomes. In Delftia acidovorans (strain DSM 14801 / SPH-1), this protein is Peptidyl-tRNA hydrolase.